Consider the following 412-residue polypeptide: Flap endonuclease 1-B (412 aa).

The N-domain stretch occupies residues 1 to 105 (MGIKGLTKLL…KELAKRSLKR (105 aa)). Asp-34 is a binding site for Mg(2+). Arg-71 serves as a coordination point for DNA. The Mg(2+) site is built by Asp-87, Glu-159, Glu-161, Asp-180, and Asp-182. Residues 123–254 (LIEKFSKRTV…QRALKLIRQH (132 aa)) form an I-domain region. A DNA-binding site is contributed by Glu-159. DNA contacts are provided by Gly-232 and Asp-234. Position 234 (Asp-234) interacts with Mg(2+).

The protein belongs to the XPG/RAD2 endonuclease family. FEN1 subfamily. As to quaternary structure, interacts with PCNA. Three molecules of FEN1 bind to one PCNA trimer with each molecule binding to one PCNA monomer. PCNA stimulates the nuclease activity without altering cleavage specificity. Mg(2+) is required as a cofactor. Phosphorylated. Phosphorylation upon DNA damage induces relocalization to the nuclear plasma.

It is found in the nucleus. It localises to the nucleolus. The protein localises to the nucleoplasm. The protein resides in the mitochondrion. In terms of biological role, structure-specific nuclease with 5'-flap endonuclease and 5'-3' exonuclease activities involved in DNA replication and repair. During DNA replication, cleaves the 5'-overhanging flap structure that is generated by displacement synthesis when DNA polymerase encounters the 5'-end of a downstream Okazaki fragment. It enters the flap from the 5'-end and then tracks to cleave the flap base, leaving a nick for ligation. Also involved in the long patch base excision repair (LP-BER) pathway, by cleaving within the apurinic/apyrimidinic (AP) site-terminated flap. Acts as a genome stabilization factor that prevents flaps from equilibrating into structures that lead to duplications and deletions. Also possesses 5'-3' exonuclease activity on nicked or gapped double-stranded DNA, and exhibits RNase H activity. Also involved in replication and repair of rDNA and in repairing mitochondrial DNA. This Oryza sativa subsp. indica (Rice) protein is Flap endonuclease 1-B.